Here is a 489-residue protein sequence, read N- to C-terminus: Equilibrative nucleobase transporter 1 (489 aa).

A helical membrane pass occupies residues 17 to 37; it reads LLECLGFAGVLFGWTSLVFVF. N-linked (GlcNAc...) asparagine glycosylation is present at asparagine 56. Transmembrane regions (helical) follow at residues 72–92, 102–122, 123–143, and 158–180; these read LIFT…GYIF, LIAI…SADS, AVLL…FLIT, and IITM…KLLY. At serine 253 the chain carries Phosphoserine. Threonine 258 is subject to Phosphothreonine. 6 helical membrane-spanning segments follow: residues 277-297, 318-338, 358-380, 402-422, 426-446, and 455-475; these read FAWH…FIGT, NAFA…GLLM, AAAL…GFAV, SFLY…EHFG, GLVM…FTLI, and LYVN…PFLV.

It belongs to the SLC43A transporter (TC 2.A.1.44) family.

The protein resides in the basolateral cell membrane. The enzyme catalyses adenine(out) = adenine(in). It catalyses the reaction guanine(out) = guanine(in). It carries out the reaction hypoxanthine(out) = hypoxanthine(in). In terms of biological role, sodium-independent purine-selective nucleobase transporter which mediates the equilibrative transport of extracellular purine nucleobases such as adenine, guanine and hypoxanthine. May regulate fatty acid (FA) transport in adipocytes, acting as a positive regulator of FA efflux and as a negative regulator of FA uptake. The sequence is that of Equilibrative nucleobase transporter 1 (SLC43A3) from Bos taurus (Bovine).